The following is a 62-amino-acid chain: Glucagon (62 aa).

The protein belongs to the glucagon family.

It is found in the secreted. Its function is as follows. Promotes hydrolysis of glycogen and lipids, and raises the blood sugar level. The sequence is that of Glucagon (gcg) from Scyliorhinus canicula (Small-spotted catshark).